Consider the following 408-residue polypeptide: Ribosomal RNA large subunit methyltransferase DR_0049 (408 aa).

Belongs to the methyltransferase superfamily.

The enzyme catalyses cytidine(2499) in 23S rRNA + S-adenosyl-L-methionine = 5-methylcytidine(2499) in 23S rRNA + S-adenosyl-L-homocysteine + H(+). Specifically methylates the cytosine at position 2499 (m5C2499) of 23S rRNA. This chain is Ribosomal RNA large subunit methyltransferase DR_0049, found in Deinococcus radiodurans (strain ATCC 13939 / DSM 20539 / JCM 16871 / CCUG 27074 / LMG 4051 / NBRC 15346 / NCIMB 9279 / VKM B-1422 / R1).